Consider the following 390-residue polypeptide: Digeranylgeranylglycerophospholipid reductase (390 aa).

FAD contacts are provided by alanine 18, glutamate 37, cysteine 48, alanine 49, alanine 51, arginine 98, valine 122, aspartate 278, glycine 290, and isoleucine 291. Valine 368 is an a 2,3-bis-O-(geranylgeranyl)-sn-glycerol 1-phospholipid binding site.

Belongs to the geranylgeranyl reductase family. DGGGPL reductase subfamily. FAD is required as a cofactor.

It catalyses the reaction a 2,3-bis-O-phytanyl-sn-glycerol 1-phospholipid + 8 A = a 2,3-bis-O-(geranylgeranyl)-sn-glycerol 1-phospholipid + 8 AH2. The enzyme catalyses 2,3-bis-O-(phytanyl)-sn-glycerol 1-phosphate + 8 A = 2,3-bis-O-(geranylgeranyl)-sn-glycerol 1-phosphate + 8 AH2. The catalysed reaction is CDP-2,3-bis-O-(geranylgeranyl)-sn-glycerol + 8 AH2 = CDP-2,3-bis-O-(phytanyl)-sn-glycerol + 8 A. It carries out the reaction archaetidylserine + 8 AH2 = 2,3-bis-O-phytanyl-sn-glycero-3-phospho-L-serine + 8 A. The protein operates within membrane lipid metabolism; glycerophospholipid metabolism. In terms of biological role, is involved in the reduction of 2,3-digeranylgeranylglycerophospholipids (unsaturated archaeols) into 2,3-diphytanylglycerophospholipids (saturated archaeols) in the biosynthesis of archaeal membrane lipids. Catalyzes the formation of archaetidic acid (2,3-di-O-phytanyl-sn-glyceryl phosphate) from 2,3-di-O-geranylgeranylglyceryl phosphate (DGGGP) via the hydrogenation of each double bond of the isoprenoid chains. Is also probably able to reduce double bonds of geranyl groups in CDP-2,3-bis-O-(geranylgeranyl)-sn-glycerol and archaetidylserine, thus acting at various stages in the biosynthesis of archaeal membrane lipids. The polypeptide is Digeranylgeranylglycerophospholipid reductase (Methanococcus maripaludis (strain C7 / ATCC BAA-1331)).